A 357-amino-acid chain; its full sequence is DNA polymerase IV (357 aa).

A UmuC domain is found at 4–185 (IIHCDCDCFY…LPVERLFGVG (182 aa)). D8 and D103 together coordinate Mg(2+). Residue E104 is part of the active site.

The protein belongs to the DNA polymerase type-Y family. Monomer. Requires Mg(2+) as cofactor.

Its subcellular location is the cytoplasm. The catalysed reaction is DNA(n) + a 2'-deoxyribonucleoside 5'-triphosphate = DNA(n+1) + diphosphate. Its function is as follows. Poorly processive, error-prone DNA polymerase involved in untargeted mutagenesis. Copies undamaged DNA at stalled replication forks, which arise in vivo from mismatched or misaligned primer ends. These misaligned primers can be extended by PolIV. Exhibits no 3'-5' exonuclease (proofreading) activity. May be involved in translesional synthesis, in conjunction with the beta clamp from PolIII. The protein is DNA polymerase IV of Ralstonia nicotianae (strain ATCC BAA-1114 / GMI1000) (Ralstonia solanacearum).